The chain runs to 320 residues: Membrane protein insertase YidC 2 (320 aa).

An N-terminal signal peptide occupies residues 1-23 (MKNLKKKLTLTGLMTAGLLFLSG). C24 is lipidated: N-palmitoyl cysteine. C24 is lipidated: S-diacylglycerol cysteine. Transmembrane regions (helical) follow at residues 68 to 88 (YGWG…PLGL), 142 to 162 (MLSS…IALY), 178 to 198 (GIPL…LYFI), 217 to 237 (AMLI…PAGV), and 239 to 259 (LYWA…TFIM). Residues 270–320 (EFTKNPPKINNEGLKDVTPTSVQENFKEITSERNEKERKSGGRNAGKQNRK) form a disordered region. The span at 294–309 (NFKEITSERNEKERKS) shows a compositional bias: basic and acidic residues.

The protein belongs to the OXA1/ALB3/YidC family. Type 2 subfamily.

Its subcellular location is the cell membrane. Functionally, required for the insertion and/or proper folding and/or complex formation of integral membrane proteins into the membrane. Involved in integration of membrane proteins that insert both dependently and independently of the Sec translocase complex, as well as at least some lipoproteins. The chain is Membrane protein insertase YidC 2 from Lactococcus lactis subsp. lactis (strain IL1403) (Streptococcus lactis).